The primary structure comprises 436 residues: MVMTKKDTNISTQQPLWLQGYIDSPEKQNQLYKKTLKILIFSQIFGGAGLGAGITVGALLAQDMIGSENVAGIPTALFTFGSAVAALLIGASSQRFGRRAGLAGGFLIGGLGAIGVIIAALINSVALLFVSLLIYGAGMASNLQVRYAGTDLANEKQRATAASMALVSTTLGAVVGPNLVNTMGEFADSIGVPNLAGPFIMSGAAFIIAGIILLIFLRPDPLFVSTAIANAEKKDDKVQIGGSLKNPAIDKKGIMVGAVIMILAQLIMTAIMTMTPVHMGHHGHGLSEVGLVIGLHIAAMYLPSPLTGLLVDKFGRTTMAIASGATLLAAGLVAAIAPADSLSLLILALVLLGVGWNFGLLTGTALIIDSTHPSLRAKTQGTFDVLLALSGAAGGALSGMVVAHSSYTILSISGAVLSLLLIPVVIWYFRRIQEKA.

Helical transmembrane passes span 38–58 (ILIFSQIFGGAGLGAGITVGA), 70–90 (VAGIPTALFTFGSAVAALLIG), 102–122 (LAGGFLIGGLGAIGVIIAALI), 125–145 (VALLFVSLLIYGAGMASNLQV), 160–180 (TAASMALVSTTLGAVVGPNLV), 197–217 (GPFIMSGAAFIIAGIILLIFL), 254–274 (IMVGAVIMILAQLIMTAIMTM), 291–311 (LVIGLHIAAMYLPSPLTGLLV), 319–339 (MAIASGATLLAAGLVAAIAPA), 342–362 (LSLLILALVLLGVGWNFGLLT), 383–403 (FDVLLALSGAAGGALSGMVVA), and 409–429 (ILSISGAVLSLLLIPVVIWYF).

Belongs to the major facilitator superfamily.

The protein localises to the cell membrane. This is an uncharacterized protein from Bacillus subtilis (strain 168).